The sequence spans 407 residues: Putative D-cysteine desulfhydrase 2, mitochondrial (407 aa).

The N-terminal 34 residues, 1–34, are a transit peptide targeting the mitochondrion; that stretch reads MRPSPALAGGGRTVANLLSATEWMLPSPATQVHT. Residues 39–72 form a disordered region; that stretch reads PSHSPPSPPHHFAFSNLTTAPKRNGGKGEEEGRP. Lys-90 is modified (N6-(pyridoxal phosphate)lysine).

Belongs to the ACC deaminase/D-cysteine desulfhydrase family. Pyridoxal 5'-phosphate is required as a cofactor.

Its subcellular location is the mitochondrion. The catalysed reaction is D-cysteine + H2O = hydrogen sulfide + pyruvate + NH4(+) + H(+). Its function is as follows. Catalyzes the production of hydrogen sulfide (H2S) from cysteine. The sequence is that of Putative D-cysteine desulfhydrase 2, mitochondrial from Oryza sativa subsp. japonica (Rice).